Consider the following 330-residue polypeptide: Mas-related G-protein coupled receptor member B8 (330 aa).

The Extracellular portion of the chain corresponds to 1-33; it reads MDSSFPDWNIEFREQNESYFMESSSCDMSLAMS. N-linked (GlcNAc...) asparagine glycosylation occurs at asparagine 16. The chain crosses the membrane as a helical span at residues 34 to 54; sequence LLSIIIAIIGLTGNVIVLQLL. Over 55 to 62 the chain is Cytoplasmic; it reads GFHMHRNA. The chain crosses the membrane as a helical span at residues 63–83; that stretch reads FSVYIFNLSGANFLFLCTHIV. Residues 84–101 lie on the Extracellular side of the membrane; it reads FSLENLIRQFHYIDIHMA. The helical transmembrane segment at 102–122 threads the bilayer; it reads LFSVNVTILAYLAGVSMITAI. Residues 123-146 lie on the Cytoplasmic side of the membrane; it reads SVEYWLSVLWPTWYHAQRPKHTST. The chain crosses the membrane as a helical span at residues 147-167; the sequence is VICTLLWVFSLLLTLWNWIIC. Residues 168–177 are Extracellular-facing; sequence KVLDYIYNWD. A helical transmembrane segment spans residues 178-198; that stretch reads MCWKLALIIVVWLLVLFVVLS. Over 199–219 the chain is Cytoplasmic; it reads RSNQALLFRVFCGSQQTPVTR. A helical transmembrane segment spans residues 220–240; it reads LLVTIMLTALVVLICGFGIGI. Residues 241 to 260 lie on the Extracellular side of the membrane; the sequence is CFFYWKKEENSIMPCGYFYE. Residues 261-281 traverse the membrane as a helical segment; sequence TILLLSGVNSCANPIICLFVG. The Cytoplasmic segment spans residues 282–330; the sequence is SIKHCQFQCGTLRLILQRAIQESPEEEDEEVEEVVEQEGGEEDEESTTL. Residues 302–330 form a disordered region; it reads QESPEEEDEEVEEVVEQEGGEEDEESTTL. Residues 304 to 330 show a composition bias toward acidic residues; that stretch reads SPEEEDEEVEEVVEQEGGEEDEESTTL.

Belongs to the G-protein coupled receptor 1 family. Mas subfamily.

It localises to the membrane. In terms of biological role, orphan receptor. Probably involved in the function of nociceptive neurons. May regulate nociceptor function and/or development, including the sensation or modulation of pain. The sequence is that of Mas-related G-protein coupled receptor member B8 (Mrgprb8) from Mus musculus (Mouse).